Reading from the N-terminus, the 230-residue chain is TorCAD operon transcriptional regulatory protein TorR (230 aa).

Positions 4 to 117 (HIVIVEDEPV…ELVVRVKNLL (114 aa)) constitute a Response regulatory domain. Residue Asp53 is modified to 4-aspartylphosphate. The ompR/PhoB-type DNA-binding region spans 132–227 (DNCYRFAGYC…QHGEGYFLAA (96 aa)).

Phosphorylated and dephosphorylated by TorS.

The protein resides in the cytoplasm. Member of the two-component regulatory system TorS/TorR involved in the anaerobic utilization of trimethylamine-N-oxide (TMAO). Phosphorylated TorR activates the transcription of the torCAD operon by binding to four decameric boxes located in the torCAD promoter. Box1, 2 and 4 contain the DNA sequence 5'-CTGTTCATAT-3' and box3 contains the DNA sequence 5'-CCGTTCATCC-3'. Phosphorylated as well as unphosphorylated TorR negatively regulates its own expression by binding to box1 and 2. The protein is TorCAD operon transcriptional regulatory protein TorR (torR) of Escherichia coli O157:H7.